We begin with the raw amino-acid sequence, 951 residues long: Kinase suppressor of Ras 2 (951 aa).

The tract at residues 237 to 298 (PPPPPLESGH…PGTPPPSSRK (62 aa)) is disordered. Low complexity predominate over residues 260 to 274 (RTPPRTPNIVTTVTP). A phosphothreonine mark is found at Thr-273 and Thr-277. A Phorbol-ester/DAG-type zinc finger spans residues 413–457 (KHRFSTKYWMSQTCTVCGKGMLFGLKCKNCKLKCHNKCTKEAPPC). Zn(2+)-binding residues include His-414, Cys-426, Cys-429, Cys-439, Cys-442, His-447, Cys-450, and Cys-457. Phosphoserine; by MARK3 is present on Ser-475. Disordered regions lie at residues 489-559 (RYSD…QKKN) and 614-634 (EPTS…DEFE). The segment covering 494–503 (HISQTLPKTN) has biased composition (polar residues). Thr-498 bears the Phosphothreonine mark. Low complexity predominate over residues 518–531 (SSSNPSSTTSSTPS). Residues 532–552 (SPAPPLPPSATPPSPLHPSPQ) show a composition bias toward pro residues. Residues 667–932 (LEIGELIGKG…TKLMDMLEKL (266 aa)) enclose the Protein kinase domain. 673–681 (IGKGRFGQV) is an ATP binding site. Asp-787 (proton donor/acceptor) is an active-site residue. Residues Lys-789 and Asp-804 each contribute to the ATP site.

The protein belongs to the protein kinase superfamily. TKL Ser/Thr protein kinase family. Heterodimerizes (via N-terminus) with BRAF (via N-terminus) in a MAP2K1/MEK1-dependent manner. Interacts with BRAF; this increases the low intrinsic protein kinase activity of KSR2. Interacts with MAP2K1, forming a heterodimer that can dimerize to form a heterotetramer. Interacts with MAP3K8, MAPK, RAS and RAF. In terms of processing, phosphorylated on Ser-475 by MARK3.

It is found in the cytoplasm. Its subcellular location is the membrane. It catalyses the reaction L-seryl-[protein] + ATP = O-phospho-L-seryl-[protein] + ADP + H(+). The catalysed reaction is L-threonyl-[protein] + ATP = O-phospho-L-threonyl-[protein] + ADP + H(+). Functionally, location-regulated scaffold connecting MEK to RAF. Has very low protein kinase activity and can phosphorylate MAP2K1 at several Ser and Thr residues with very low efficiency (in vitro). Acts as MAP2K1/MEK1-dependent allosteric activator of BRAF; upon binding to MAP2K1/MEK1, dimerizes with BRAF and promotes BRAF-mediated phosphorylation of MAP2K1/MEK1. Interaction with BRAF enhances KSR2-mediated phosphorylation of MAP2K1 (in vitro). Blocks MAP3K8 kinase activity and MAP3K8-mediated signaling. Acts as a negative regulator of MAP3K3-mediated activation of ERK, JNK and NF-kappa-B pathways, inhibiting MAP3K3-mediated interleukin-8 production. This chain is Kinase suppressor of Ras 2, found in Mus musculus (Mouse).